A 348-amino-acid polypeptide reads, in one-letter code: MIDTIEKEDTIISEEEAAQYDRQIRLWGLDAQKRLRGSRVLLVGLRGLGAEVAKNLILAGVKGLTLLDHEQVTEESRRAQFLIPVDADGQNHAQASLERAQFLNPMVEVKADTEPVESKPDDFFFQFDAVCLTRCSRDLMVRVDQLCASRNIKVFCGDVYGYNGYMFSDLGQEYHYVEEKPKVVKGSNEANDGPEAKKPKIDPNETTMVKKTISFCSLKEALEVDWTTEKAKSSLKRIPADYFLLQVLLKFRTDKGRDPQPDSFAEDSQLLLQIRDDVLETMGLSSDLLPNTFVSYCFSEMSPVCAVVGGVLGQEIVKALSQRDAPHRNFFFFDGLKGSGVVDYFSSK.

The protein belongs to the ubiquitin-activating E1 family. Heterodimer of sae1 and uba2/sae2. The heterodimer corresponds to the two domains that are encoded on a single polypeptide chain in ubiquitin-activating enzyme E1. Interacts with ube2i.

Its subcellular location is the nucleus. The protein operates within protein modification; protein sumoylation. The heterodimer acts as an E1 ligase for sumo1, sumo2, and sumo3. It mediates ATP-dependent activation of sumo proteins followed by formation of a thioester bond between a sumo protein and a conserved active site cysteine residue on uba2/sae2. The chain is SUMO-activating enzyme subunit 1 (sae1) from Danio rerio (Zebrafish).